An 818-amino-acid polypeptide reads, in one-letter code: Sodium/hydrogen exchanger 1 (818 aa).

The Extracellular segment spans residues 1–98; it reads MLLWSGICGL…FPVLGIDYTH (98 aa). Positions 39 to 76 are disordered; it reads PSPTASTIRGSEPPRERSIGDVTTAPPELAPESRPVNH. The N-linked (GlcNAc...) asparagine glycan is linked to N75. Residues 99–121 traverse the membrane as a helical segment; the sequence is VRTPFEISLWILLACLMKIGFHV. The Cytoplasmic segment spans residues 122–130; the sequence is IPTISSIVP. Residues 131–148 traverse the membrane as a helical segment; it reads ESCLLIVVGLLVGGLIKA. At 149–158 the chain is on the extracellular side; the sequence is VGETPPFLQS. The helical transmembrane segment at 159-176 threads the bilayer; that stretch reads EVFFLFLLPPIILDAGYF. Over 177–186 the chain is Cytoplasmic; sequence LPLRQFTENL. A helical membrane pass occupies residues 187 to 215; the sequence is GTILIFAVVGTLWNAFFLGGLMYAVCLVG. Residues 216 to 222 lie on the Extracellular side of the membrane; it reads GEQINNI. Residues 223-249 form a helical membrane-spanning segment; sequence GLLDNLLFGSIISAVDPVAVLAVFEEI. The Cytoplasmic portion of the chain corresponds to 250–252; the sequence is HIN. Residues 253–283 form a helical membrane-spanning segment; that stretch reads ELLHILVFGESLLNDAVTVVLYHLFEEFANY. At 284-287 the chain is on the extracellular side; the sequence is DRVG. A helical membrane pass occupies residues 288–322; it reads IVDIVLGFLSFFVVSLGGVFVGVVYGVIAAFTSRF. Residues 323 to 328 lie on the Cytoplasmic side of the membrane; that stretch reads TSHIRV. The chain crosses the membrane as a helical span at residues 329–341; that stretch reads IEPLFVFLYSYMA. At 342-350 the chain is on the extracellular side; it reads YLSAELFHL. The helical transmembrane segment at 351-371 threads the bilayer; it reads SGIMALIASGVVMRPYVEANI. The Cytoplasmic segment spans residues 372-373; it reads SH. A helical transmembrane segment spans residues 374-404; sequence KSHTTIKYFLKMWSSVSETLIFIFLGVSTVA. The Extracellular segment spans residues 405-410; that stretch reads GSHHWN. A helical membrane pass occupies residues 411–438; it reads WTFVISTLLFCLIARVLGVLGLTWFINK. At 439–444 the chain is on the cytoplasmic side; sequence FRIVKL. A helical transmembrane segment spans residues 445-469; it reads TPKDQFIIAYGGLRGAIAFSLGHLL. Residues 470–475 lie on the Extracellular side of the membrane; the sequence is DKNHFP. Residues 476-505 traverse the membrane as a helical segment; sequence MCDLFLTAIITVIFFTVFVQGMTIRPLVDL. An interaction with TESC region spans residues 503–545; it reads VDLLAVKKKQETKRSINEEIHTQFLDHLLTGIEDICGHYGHHH. Topologically, residues 506 to 818 are cytoplasmic; sequence LAVKKKQETK…EGEPFIPKGQ (313 aa). The interval 509-516 is PI(4,5)P2-binding region; that stretch reads KKKQETKR. The interaction with CHP2 stretch occupies residues 515 to 545; the sequence is KRSINEEIHTQFLDHLLTGIEDICGHYGHHH. Residues 540 to 545 are confers pH-dependent PI(4,5)P2 binding; it reads HYGHHH. Residues 552–560 form a PI(4,5)P2-binding region region; sequence RFNKKYVKK. Phosphoserine is present on residues S599 and S602. Position 603 is a phosphothreonine (T603). Phosphoserine occurs at positions 605 and 648. The interval 633–818 is interaction with TESC; the sequence is KILRNNLQKT…EGEPFIPKGQ (186 aa). Residues 633–818 form an interaction with CALM1 region; it reads KILRNNLQKT…EGEPFIPKGQ (186 aa). The interval 684–687 is interaction with PPP3CA; the sequence is LTVP. Phosphoserine is present on residues S693, S697, and S703. An interaction with PPP3CA region spans residues 715 to 720; sequence PVITID. Phosphoserine is present on residues S723, S726, and S729. The tract at residues 739-818 is disordered; the sequence is GKVLGLSREP…EGEPFIPKGQ (80 aa). 2 positions are modified to phosphothreonine: T752 and T782. Residues 785 to 794 are compositionally biased toward polar residues; it reads PSDSPSSQRI. Phosphoserine occurs at positions 788, 790, and 799.

Belongs to the monovalent cation:proton antiporter 1 (CPA1) transporter (TC 2.A.36) family. In terms of assembly, homodimer; dimerization is crucial for its function. Oligomer. Interacts with CALM in a calcium-dependent manner. Interacts with TESC. Interacts (via the juxtamembrane region of the cytoplasmic C-terminal domain) with CHP1; the interaction occurs at the plasma membrane in a calcium-dependent manner. Interacts with CHP2; the interaction occurs in a calcium-dependent manner. Interacts with EZR; regulates the cytoskeletal interactions of SLC9A1 and promotes stress fiber formation. Ubiquitinated, leading to its degradation by the proteasome. Ubiquitination is reduced by CHP1. Post-translationally, O-glycosylated. In terms of processing, palmitoylated; may play a major role in SLC9A1 regulation. Phosphorylation at Thr-782 increases SLC9A1 activity. Specifically dephosphorylated at Thr-782 by PPP3CA that negatively regulates SLC9A1 activity. Phosphorylation at Ser-648 by AKT1 reduces SLC9A1 binding to CALM1.

Its subcellular location is the cell membrane. It localises to the basolateral cell membrane. The enzyme catalyses Na(+)(in) + H(+)(out) = Na(+)(out) + H(+)(in). It carries out the reaction Li(+)(out) + H(+)(in) = Li(+)(in) + H(+)(out). The catalysed reaction is Li(+)(in) + Na(+)(out) = Li(+)(out) + Na(+)(in). With respect to regulation, activated at acidic pHs. Inhibited by cariporide and eniporide. Inhibited by amiloride and 5-amino-substituted derivatives. Phosphatidylinositol 4,5-bisphosphate (PI(4,5)P2) and phosphatidylinositol 3,4,5-trisphosphate (PI(3,4,5)P3) bind and differentially regulate SLC9A1 activity. In terms of biological role, electroneutral Na(+) /H(+) antiporter that extrudes Na(+) in exchange for external protons driven by the inward sodium ion chemical gradient, protecting cells from acidification that occurs from metabolism. Exchanges intracellular H(+) ions for extracellular Na(+) in 1:1 stoichiometry. Plays a key role in maintening intracellular pH neutral and cell volume, and thus is important for cell growth, proliferation, migration and survival. In addition, can transport lithium Li(+) and also functions as a Na(+)/Li(+) antiporter. SLC9A1 also functions in membrane anchoring and organization of scaffolding complexes that coordinate signaling inputs. The protein is Sodium/hydrogen exchanger 1 (SLC9A1) of Sus scrofa (Pig).